We begin with the raw amino-acid sequence, 191 residues long: Adenine phosphoribosyltransferase (191 aa).

Belongs to the purine/pyrimidine phosphoribosyltransferase family. In terms of assembly, homodimer.

The protein localises to the cytoplasm. The catalysed reaction is AMP + diphosphate = 5-phospho-alpha-D-ribose 1-diphosphate + adenine. The protein operates within purine metabolism; AMP biosynthesis via salvage pathway; AMP from adenine: step 1/1. Functionally, catalyzes a salvage reaction resulting in the formation of AMP, that is energically less costly than de novo synthesis. The sequence is that of Adenine phosphoribosyltransferase from Nocardia farcinica (strain IFM 10152).